The primary structure comprises 171 residues: Shikimate kinase (171 aa).

13-18 (GVGKST) contributes to the ATP binding site. Residue serine 17 coordinates Mg(2+). Substrate is bound by residues aspartate 35, arginine 59, and glycine 81. An ATP-binding site is contributed by arginine 118. Arginine 136 provides a ligand contact to substrate. An ATP-binding site is contributed by arginine 153.

This sequence belongs to the shikimate kinase family. As to quaternary structure, monomer. It depends on Mg(2+) as a cofactor.

It localises to the cytoplasm. It catalyses the reaction shikimate + ATP = 3-phosphoshikimate + ADP + H(+). The protein operates within metabolic intermediate biosynthesis; chorismate biosynthesis; chorismate from D-erythrose 4-phosphate and phosphoenolpyruvate: step 5/7. In terms of biological role, catalyzes the specific phosphorylation of the 3-hydroxyl group of shikimic acid using ATP as a cosubstrate. This chain is Shikimate kinase, found in Streptomyces avermitilis (strain ATCC 31267 / DSM 46492 / JCM 5070 / NBRC 14893 / NCIMB 12804 / NRRL 8165 / MA-4680).